The chain runs to 463 residues: Asparagine--tRNA ligase (463 aa).

It belongs to the class-II aminoacyl-tRNA synthetase family. In terms of assembly, homodimer.

It localises to the cytoplasm. The enzyme catalyses tRNA(Asn) + L-asparagine + ATP = L-asparaginyl-tRNA(Asn) + AMP + diphosphate + H(+). In Clostridium kluyveri (strain ATCC 8527 / DSM 555 / NBRC 12016 / NCIMB 10680 / K1), this protein is Asparagine--tRNA ligase.